We begin with the raw amino-acid sequence, 364 residues long: 3-isopropylmalate dehydrogenase (364 aa).

Glycine 78 to glutamate 91 contacts NAD(+). Arginine 99, arginine 109, arginine 138, and aspartate 228 together coordinate substrate. Mg(2+) is bound by residues aspartate 228, aspartate 252, and aspartate 256. An NAD(+)-binding site is contributed by glycine 286–asparagine 298.

Belongs to the isocitrate and isopropylmalate dehydrogenases family. LeuB type 1 subfamily. As to quaternary structure, homodimer. The cofactor is Mg(2+). It depends on Mn(2+) as a cofactor.

The protein localises to the cytoplasm. It carries out the reaction (2R,3S)-3-isopropylmalate + NAD(+) = 4-methyl-2-oxopentanoate + CO2 + NADH. It functions in the pathway amino-acid biosynthesis; L-leucine biosynthesis; L-leucine from 3-methyl-2-oxobutanoate: step 3/4. Functionally, catalyzes the oxidation of 3-carboxy-2-hydroxy-4-methylpentanoate (3-isopropylmalate) to 3-carboxy-4-methyl-2-oxopentanoate. The product decarboxylates to 4-methyl-2 oxopentanoate. The protein is 3-isopropylmalate dehydrogenase of Buchnera aphidicola subsp. Uroleucon obscurum.